Reading from the N-terminus, the 570-residue chain is Sulfite reductase [NADPH] hemoprotein beta-component (570 aa).

Positions 434, 440, 479, and 483 each coordinate [4Fe-4S] cluster. Residue Cys483 coordinates siroheme.

It belongs to the nitrite and sulfite reductase 4Fe-4S domain family. In terms of assembly, alpha(8)-beta(8). The alpha component is a flavoprotein, the beta component is a hemoprotein. It depends on siroheme as a cofactor. [4Fe-4S] cluster is required as a cofactor.

It carries out the reaction hydrogen sulfide + 3 NADP(+) + 3 H2O = sulfite + 3 NADPH + 4 H(+). It functions in the pathway sulfur metabolism; hydrogen sulfide biosynthesis; hydrogen sulfide from sulfite (NADPH route): step 1/1. Functionally, component of the sulfite reductase complex that catalyzes the 6-electron reduction of sulfite to sulfide. This is one of several activities required for the biosynthesis of L-cysteine from sulfate. This Shigella boydii serotype 4 (strain Sb227) protein is Sulfite reductase [NADPH] hemoprotein beta-component.